The chain runs to 93 residues: Putative transmembrane protein ORF25 (93 aa).

3 helical membrane passes run 1 to 21 (MAGI…NVNA), 22 to 42 (FLVL…YASI), and 60 to 80 (LWIF…VMSL).

The protein localises to the host membrane. The protein is Putative transmembrane protein ORF25 of His1 virus (isolate Australia/Victoria) (His1V).